Reading from the N-terminus, the 274-residue chain is Protein LNK4 (274 aa).

The tract at residues 209–249 (NSQQKSDSNSDEFLEDRTRETEFETKLNRQSRGQSHIQQDG) is disordered. Residues 223–235 (EDRTRETEFETKL) show a composition bias toward basic and acidic residues. Positions 236–249 (NRQSRGQSHIQQDG) are enriched in polar residues.

In terms of assembly, interacts with REV8.

Functionally, probable transcriptional coactivator. The sequence is that of Protein LNK4 from Arabidopsis thaliana (Mouse-ear cress).